Consider the following 432-residue polypeptide: tRNA(Ile)-lysidine synthase (432 aa).

19–24 (STGIDS) provides a ligand contact to ATP.

This sequence belongs to the tRNA(Ile)-lysidine synthase family.

It localises to the cytoplasm. The enzyme catalyses cytidine(34) in tRNA(Ile2) + L-lysine + ATP = lysidine(34) in tRNA(Ile2) + AMP + diphosphate + H(+). Ligates lysine onto the cytidine present at position 34 of the AUA codon-specific tRNA(Ile) that contains the anticodon CAU, in an ATP-dependent manner. Cytidine is converted to lysidine, thus changing the amino acid specificity of the tRNA from methionine to isoleucine. The sequence is that of tRNA(Ile)-lysidine synthase from Staphylococcus epidermidis (strain ATCC 35984 / DSM 28319 / BCRC 17069 / CCUG 31568 / BM 3577 / RP62A).